An 805-amino-acid polypeptide reads, in one-letter code: Leucine--tRNA ligase (805 aa).

The 'HIGH' region motif lies at 40-51; it reads PYPSGSGLHVGH. The 'KMSKS' region motif lies at 576–580; it reads KMSKS. Residue lysine 579 participates in ATP binding.

The protein belongs to the class-I aminoacyl-tRNA synthetase family.

The protein resides in the cytoplasm. It catalyses the reaction tRNA(Leu) + L-leucine + ATP = L-leucyl-tRNA(Leu) + AMP + diphosphate. In Chlorobium phaeovibrioides (strain DSM 265 / 1930) (Prosthecochloris vibrioformis (strain DSM 265)), this protein is Leucine--tRNA ligase.